Reading from the N-terminus, the 341-residue chain is Arfaptin-2 (341 aa).

The interval 46 to 84 (NETSIVSGGYGGSGDGLIPTGSGRHPSHSTSPSGPGDEV) is disordered. The span at 65 to 81 (TGSGRHPSHSTSPSGPG) shows a compositional bias: low complexity. Ser-72 is modified (phosphoserine). Residues 121-321 (TVDLELELQI…NQKQLEQTLQ (201 aa)) enclose the AH domain.

Forms homodimers or heterodimers with ARFIP1. Interacts with RAC1. Specifically binds to GTP-bound ARF1 and ARF6, but binds to RAC1.GTP and RAC1.GDP with similar affinities. Interacts with ARL1. Interacts (via N-terminus) with IKBKB and IKBKG; these interactions inhibit activation of NF-kappa-B.

The protein localises to the golgi apparatus. It localises to the trans-Golgi network membrane. Functionally, plays a role in constitutive metalloproteinase (MMP) secretion from the trans Golgi network. May have important functions during vesicle biogenesis at certain cargo subdomains, which could be predominantly utilized by secreted MMPs, such as MMP7 and MMP2. Also involved in autophagy by regulating the starvation-dependent trafficking of ATG9A vesicles which deliver the phosphatidylinositol 4-kinase beta (PI4KB) to the autophagosome initiation site. Involved in phagophore growth during mitophagy by regulating ATG9A trafficking to mitochondria. In addition, plays a role in NF-kappa-B inhibition by interacting with IKBKB and IKBKG. In Mus musculus (Mouse), this protein is Arfaptin-2.